Here is a 484-residue protein sequence, read N- to C-terminus: Probable peptide/nitrate transporter At3g43790 (484 aa).

12 helical membrane passes run 39-59 (FIWLVSLCTALPISSLFPYIY), 76-96 (FYAGFVGSSFMIGRALTSIFW), 107-127 (PIILIGTFSVIIFNTLFGLST), 129-149 (FWLAISVRFLLGCFNCLLGVI), 168-188 (VVSTSRGIGLILGPAIGGYLA), 210-230 (FLPSLVISVYATAVLIACWWL), 278-298 (MAIIIVYCVFSLQEIAYNEIF), 318-338 (VGEVLAISGLGLLVFQLLVYP), 355-375 (VLLIPLLSCYPYIALLSGVTL), 381-401 (CASIIKNALSISLVTGLFIML), 416-436 (ISMTAMSVFKSFGPAGGGVLF), and 460-480 (VFLVLNLVQLVGLILTFIPYI).

Belongs to the major facilitator superfamily.

Its subcellular location is the membrane. This chain is Probable peptide/nitrate transporter At3g43790 (ZIFL2), found in Arabidopsis thaliana (Mouse-ear cress).